A 536-amino-acid chain; its full sequence is Multicopper oxidase terE (536 aa).

The tract at residues 1-21 is disordered; that stretch reads MHWHGLSQSTAPFSDGSPQAS. Plastocyanin-like domains follow at residues 1 to 67, 79 to 238, and 354 to 488; these read MHWH…VEEK, ERIL…LSYN, and TVQK…VWMM. Residues H2, H4, H48, and H50 each contribute to the Cu cation site. H397 is a Cu cation binding site.

Belongs to the multicopper oxidase family.

It functions in the pathway secondary metabolite biosynthesis. Functionally, multicopper oxidase; part of the gene cluster that mediates the biosynthesis of terrein, a fungal metabolite with ecological, antimicrobial, antiproliferative, and antioxidative activities. The first step in the pathway is performed by the polyketide synthase terA that produces 4-hydroxy-6-methylpyranon (4-HMP), orsellinic acid (OA), and 2,3-dehydro-6-hydroxymellein (2,3-dehydro-6-HM) by condensing acetyl-CoA with two, three, or four malonyl-CoA units, respectively. 4-HMP and OA are not pathway intermediates, but are rather shunt or side products. 2,3-dehydro-6-HM is further converted to 6-hydroxymellein (6-HM) by the 6-hydroxymellein synthase terB. The monooxygenases terC and terD, the multicopper oxidase terE and the Kelch-like protein terF are then involved in the transformation of 6-HM to terrein. Even if they are co-regulated with the other terrein cluster genes, terH and terI seem to be dispensable for terrein production; whereas one or both of the 2 transporters terG and terJ are probably required for efficient secretion of metabolites. This Aspergillus terreus (strain NIH 2624 / FGSC A1156) protein is Multicopper oxidase terE.